The following is a 161-amino-acid chain: Ferredoxin/F(420)H(2)-dependent CoB-CoM heterodisulfide reductase subunit C (161 aa).

2 consecutive 4Fe-4S ferredoxin-type domains span residues 10 to 40 and 51 to 82; these read KAEGLDLLSCMHCGICTGSCPSGRHTGLNTR and AAVLSDYDLWLCTTCYTCQERCPRGIPITDAI. 8 residues coordinate [4Fe-4S] cluster: Cys19, Cys22, Cys25, Cys29, Cys62, Cys65, Cys68, and Cys72.

This sequence belongs to the HdrC family. The ferredoxin/F(420)H(2)-dependent CoB-CoM heterodisulfide reductase is composed of three subunits; HdrA2, HdrB2 and HdrC2. It depends on [4Fe-4S] cluster as a cofactor.

Its subcellular location is the cytoplasm. It carries out the reaction coenzyme B + coenzyme M + 2 oxidized [2Fe-2S]-[ferredoxin] = coenzyme M-coenzyme B heterodisulfide + 2 reduced [2Fe-2S]-[ferredoxin] + 2 H(+). It catalyses the reaction coenzyme B + 2 oxidized coenzyme F420-(gamma-L-Glu)(n) + coenzyme M + 2 reduced [2Fe-2S]-[ferredoxin] + 4 H(+) = coenzyme M-coenzyme B heterodisulfide + 2 reduced coenzyme F420-(gamma-L-Glu)(n) + 2 oxidized [2Fe-2S]-[ferredoxin]. The protein operates within cofactor metabolism; coenzyme M-coenzyme B heterodisulfide reduction; coenzyme B and coenzyme M from coenzyme M-coenzyme B heterodisulfide: step 1/1. Its function is as follows. Part of a complex that catalyzes the reversible reduction of CoM-S-S-CoB to the thiol-coenzymes H-S-CoM (coenzyme M) and H-S-CoB (coenzyme B). Catalyzes the transfer of electrons from ferredoxin to CoM-S-S-CoB during methanogenesis from acetate. Electrons transfer from ferredoxin to CoM-S-S-CoB via HdrA2, HdrC2 and HdrB2. In addition, the complex can use electron bifurcation to direct electron pairs from reduced coenzyme F420 towards the reduction of both ferredoxin and CoB-CoM heterodisulfide. This activity may take place during Fe(III)-dependent anaerobic methane oxidation. This Methanosarcina acetivorans (strain ATCC 35395 / DSM 2834 / JCM 12185 / C2A) protein is Ferredoxin/F(420)H(2)-dependent CoB-CoM heterodisulfide reductase subunit C.